Consider the following 245-residue polypeptide: 8-amino-3,8-dideoxy-manno-octulosonate cytidylyltransferase (245 aa).

The protein belongs to the KdsB family.

It is found in the cytoplasm. It carries out the reaction 8-amino-3,8-dideoxy-alpha-D-manno-octulosonate + CTP = CMP-8-amino-3,8-dideoxy-alpha-D-manno-oct-2-ulosonate + diphosphate. The protein operates within bacterial outer membrane biogenesis; lipopolysaccharide biosynthesis. Functionally, activates KDO8N (a required 8-carbon sugar) for incorporation into bacterial lipopolysaccharide in the Shewanella genus. This Shewanella piezotolerans (strain WP3 / JCM 13877) protein is 8-amino-3,8-dideoxy-manno-octulosonate cytidylyltransferase.